We begin with the raw amino-acid sequence, 151 residues long: Ribosome maturation factor RimP (151 aa).

Belongs to the RimP family.

The protein localises to the cytoplasm. Functionally, required for maturation of 30S ribosomal subunits. The sequence is that of Ribosome maturation factor RimP from Pasteurella multocida (strain Pm70).